The chain runs to 614 residues: Dihydroxy-acid dehydratase (614 aa).

Asp81 serves as a coordination point for Mg(2+). A [2Fe-2S] cluster-binding site is contributed by Cys122. Positions 123 and 124 each coordinate Mg(2+). The residue at position 124 (Lys124) is an N6-carboxylysine. Cys195 provides a ligand contact to [2Fe-2S] cluster. Glu491 lines the Mg(2+) pocket. Ser517 acts as the Proton acceptor in catalysis.

It belongs to the IlvD/Edd family. As to quaternary structure, homodimer. It depends on [2Fe-2S] cluster as a cofactor. Requires Mg(2+) as cofactor.

The catalysed reaction is (2R)-2,3-dihydroxy-3-methylbutanoate = 3-methyl-2-oxobutanoate + H2O. It catalyses the reaction (2R,3R)-2,3-dihydroxy-3-methylpentanoate = (S)-3-methyl-2-oxopentanoate + H2O. The protein operates within amino-acid biosynthesis; L-isoleucine biosynthesis; L-isoleucine from 2-oxobutanoate: step 3/4. Its pathway is amino-acid biosynthesis; L-valine biosynthesis; L-valine from pyruvate: step 3/4. In terms of biological role, functions in the biosynthesis of branched-chain amino acids. Catalyzes the dehydration of (2R,3R)-2,3-dihydroxy-3-methylpentanoate (2,3-dihydroxy-3-methylvalerate) into 2-oxo-3-methylpentanoate (2-oxo-3-methylvalerate) and of (2R)-2,3-dihydroxy-3-methylbutanoate (2,3-dihydroxyisovalerate) into 2-oxo-3-methylbutanoate (2-oxoisovalerate), the penultimate precursor to L-isoleucine and L-valine, respectively. This Actinobacillus succinogenes (strain ATCC 55618 / DSM 22257 / CCUG 43843 / 130Z) protein is Dihydroxy-acid dehydratase.